The primary structure comprises 1478 residues: Zinc finger protein 518A (1478 aa).

C2H2-type zinc fingers lie at residues F152–H174, F209–H231, Y236–H258, and F264–H287. The segment at T355 to L394 is disordered. K358 participates in a covalent cross-link: Glycyl lysine isopeptide (Lys-Gly) (interchain with G-Cter in SUMO2). Basic and acidic residues predominate over residues N368 to S388. Residues K390 and K428 each participate in a glycyl lysine isopeptide (Lys-Gly) (interchain with G-Cter in SUMO2) cross-link. The interval P464 to A484 is disordered. K518 participates in a covalent cross-link: Glycyl lysine isopeptide (Lys-Gly) (interchain with G-Cter in SUMO2). S652 carries the phosphoserine modification. Residues V656 to L694 form a disordered region. Low complexity predominate over residues T670–S681. Glycyl lysine isopeptide (Lys-Gly) (interchain with G-Cter in SUMO2) cross-links involve residues K707, K792, K882, K895, K987, K1008, K1041, K1055, K1078, K1180, and K1441. The segment at F1444 to H1466 adopts a C2H2-type 5 zinc-finger fold.

This sequence belongs to the krueppel C2H2-type zinc-finger protein family.

The protein resides in the nucleus. Its function is as follows. Through its association with the EHMT1-EHMT2/G9A and PRC2/EED-EZH2 histone methyltransferase complexes may function in gene silencing, regulating repressive post-translational methylation of histone tails at promoters of target genes. The sequence is that of Zinc finger protein 518A (Znf518a) from Rattus norvegicus (Rat).